The chain runs to 184 residues: dTTP/UTP pyrophosphatase (184 aa).

Asp67 (proton acceptor) is an active-site residue.

The protein belongs to the Maf family. YhdE subfamily. A divalent metal cation serves as cofactor.

Its subcellular location is the cytoplasm. The catalysed reaction is dTTP + H2O = dTMP + diphosphate + H(+). It carries out the reaction UTP + H2O = UMP + diphosphate + H(+). Nucleoside triphosphate pyrophosphatase that hydrolyzes dTTP and UTP. May have a dual role in cell division arrest and in preventing the incorporation of modified nucleotides into cellular nucleic acids. The sequence is that of dTTP/UTP pyrophosphatase from Elusimicrobium minutum (strain Pei191).